The following is a 287-amino-acid chain: Protease HtpX (287 aa).

Transmembrane regions (helical) follow at residues 4–24 (IFLL…VMSI) and 33–53 (GGLL…SLAI). Position 139 (His-139) interacts with Zn(2+). Residue Glu-140 is part of the active site. His-143 contacts Zn(2+). The next 2 helical transmembrane spans lie at 154–174 (LIQG…AGII) and 195–215 (AVVF…VAYF). Glu-220 is a Zn(2+) binding site.

It belongs to the peptidase M48B family. Zn(2+) is required as a cofactor.

It is found in the cell inner membrane. This Shewanella pealeana (strain ATCC 700345 / ANG-SQ1) protein is Protease HtpX.